A 341-amino-acid polypeptide reads, in one-letter code: Phosphate acyltransferase (341 aa).

The protein belongs to the PlsX family. As to quaternary structure, homodimer. Probably interacts with PlsY.

The protein localises to the cytoplasm. It catalyses the reaction a fatty acyl-[ACP] + phosphate = an acyl phosphate + holo-[ACP]. It functions in the pathway lipid metabolism; phospholipid metabolism. Its function is as follows. Catalyzes the reversible formation of acyl-phosphate (acyl-PO(4)) from acyl-[acyl-carrier-protein] (acyl-ACP). This enzyme utilizes acyl-ACP as fatty acyl donor, but not acyl-CoA. The sequence is that of Phosphate acyltransferase from Vibrio parahaemolyticus serotype O3:K6 (strain RIMD 2210633).